The primary structure comprises 178 residues: Methyltransferase flvH (178 aa).

Residues Q120–A136 enclose the Post-SET domain. Zn(2+)-binding residues include C124, C126, and C131.

The protein belongs to the class V-like SAM-binding methyltransferase superfamily.

It carries out the reaction L-lysine + 2 S-adenosyl-L-methionine = N(6),N(6)-dimethyl-L-lysine + 2 S-adenosyl-L-homocysteine + 2 H(+). The protein operates within secondary metabolite biosynthesis; terpenoid biosynthesis. Methyltransferase; part of the gene cluster that mediates the biosynthesis of flavunoidine, an alkaloidal terpenoid with a tetracyclic cage-like core connected to dimethylcadaverine via a C-N bond and acylated with 5,5-dimethyl-L-pipecolate. The tetracyclic core is synthesized by the terpene cyclase flvE and the cytochrome P450 monooxygenase flvD. The terpene cyclase flvE catalyzes the cyclization of farnesyl pyrophosphate (FPP) to form (1R,4R,5S)-(+)-acoradiene and the cytochrome P450 monooxygenase flvD is then responsible for oxidative conversion of (1R,4R,5S)-(+)-acoradiene into the tetracyclic cage present in the final product flavunoidine. In parallel, the N-methyltransferase flvH dimethylates L-lysine to give N,N-dimethyl-L-Lysin which is decarboxylated by flvG to afford dimethylcadaverine. The terpene cyclase-like protein flvF is the enzyme that attaches the dimethylcadaverine precusor at the C-7 of the tetracyclic cage to yield pre-flavunoidine. The cytochrome monooxygenase flvC hydroxylates the C-10 position of pre-flavunoidine whereas the NRPS flvI acylates the terpenoid core at the hydroxylated C-10 with dimethylpipecolate to yield final flavunoidine. The bifunctional enzyme flvA and the dehydrogenase flvB are responsible for the synthesis of the dimethylpipecolate precursor. The PLP-dependent lyase domain of flvA might use L-O-acetyl-homoserine and alpha-keto-isovalerate to form an intermediary ketone that can cyclize intramolecularly to yield an imine. The imine can be reduced by flvB to yield the 6-carboxylated pipecolate. The C-terminal alpha-KG-dependent oxygenase domain of flvA is then proposed to catalyze the decarboxylation to yield dimethylpipecolate. This chain is Methyltransferase flvH, found in Aspergillus flavus (strain ATCC 200026 / FGSC A1120 / IAM 13836 / NRRL 3357 / JCM 12722 / SRRC 167).